The sequence spans 339 residues: NADH-quinone oxidoreductase subunit H (339 aa).

The next 9 helical transmembrane spans lie at 10–30 (FPLI…ILCV), 50–70 (PNVV…KLLF), 82–102 (ILFI…WAVV), 115–135 (VGVL…IIAG), 161–181 (MGLV…SGII), 187–207 (IPWW…ISVL), 235–255 (MGFA…SAMT), 275–295 (IPGF…FLWI), and 310–330 (LGWK…SSVL).

It belongs to the complex I subunit 1 family. NDH-1 is composed of 14 different subunits. Subunits NuoA, H, J, K, L, M, N constitute the membrane sector of the complex.

It is found in the cell inner membrane. It carries out the reaction a quinone + NADH + 5 H(+)(in) = a quinol + NAD(+) + 4 H(+)(out). In terms of biological role, NDH-1 shuttles electrons from NADH, via FMN and iron-sulfur (Fe-S) centers, to quinones in the respiratory chain. The immediate electron acceptor for the enzyme in this species is believed to be ubiquinone. Couples the redox reaction to proton translocation (for every two electrons transferred, four hydrogen ions are translocated across the cytoplasmic membrane), and thus conserves the redox energy in a proton gradient. This subunit may bind ubiquinone. In Rickettsia canadensis (strain McKiel), this protein is NADH-quinone oxidoreductase subunit H.